Consider the following 622-residue polypeptide: Chaperone protein HscA homolog (622 aa).

It belongs to the heat shock protein 70 family.

Functionally, chaperone involved in the maturation of iron-sulfur cluster-containing proteins. Has a low intrinsic ATPase activity which is markedly stimulated by HscB. This chain is Chaperone protein HscA homolog, found in Burkholderia orbicola (strain MC0-3).